Here is a 216-residue protein sequence, read N- to C-terminus: NKG2-D type II integral membrane protein (216 aa).

Residues 1-51 (MGWIRGRRSRHSWEMSEFHNYNLDLAKNDFSTRWQKQRCPVIKSKCRENTS) are Cytoplasmic-facing. The helical; Signal-anchor for type II membrane protein transmembrane segment at 52-72 (PLFFCCFIAVAMGIRFIVMVT) threads the bilayer. Over 73-216 (IWSAVFLNSL…NTYICMQRTV (144 aa)) the chain is Extracellular. 2 disulfide bridges follow: cysteine 96-cysteine 105 and cysteine 99-cysteine 110. The C-type lectin domain occupies 98 to 213 (PCPKNWICYK…STPNTYICMQ (116 aa)). Residues asparagine 115, asparagine 131, asparagine 163, and asparagine 202 are each glycosylated (N-linked (GlcNAc...) asparagine). 2 disulfide bridges follow: cysteine 127/cysteine 211 and cysteine 189/cysteine 203.

Homodimer; disulfide-linked. Heterohexamer composed of two subunits of KLRK1 and four subunits of HCST/DAP10. Interacts (via transmembrane domain) with HCST/DAP10 (via transmembrane domain); the interaction is required for KLRK1 NK cell surface and induces NK cell-mediated cytotoxicity. Can form disulfide-bonded heterodimer with CD94. Interacts with CEACAM1; recruits PTPN6 that dephosphorylates VAV1.

The protein localises to the cell membrane. In terms of biological role, functions as an activating and costimulatory receptor involved in immunosurveillance upon binding to various cellular stress-inducible ligands displayed at the surface of autologous tumor cells and virus-infected cells. Provides both stimulatory and costimulatory innate immune responses on activated killer (NK) cells, leading to cytotoxic activity. Acts as a costimulatory receptor for T-cell receptor (TCR) in CD8(+) T-cell-mediated adaptive immune responses by amplifying T-cell activation. Stimulates perforin-mediated elimination of ligand-expressing tumor cells. Signaling involves calcium influx, culminating in the expression of TNF-alpha. Participates in NK cell-mediated bone marrow graft rejection. May play a regulatory role in differentiation and survival of NK cells. Binds to ligands belonging to various subfamilies of MHC class I-related glycoproteins. This chain is NKG2-D type II integral membrane protein (KLRK1), found in Pongo pygmaeus (Bornean orangutan).